A 457-amino-acid polypeptide reads, in one-letter code: Siroheme synthase 2 (457 aa).

The tract at residues 1 to 204 (MDHLPIFCQL…DDRQAVADTT (204 aa)) is precorrin-2 dehydrogenase /sirohydrochlorin ferrochelatase. Residues 22–23 (DV) and 43–44 (LD) contribute to the NAD(+) site. A Phosphoserine modification is found at Ser-128. Positions 216 to 457 (GEVVLVGAGP…RDKLNWFSNH (242 aa)) are uroporphyrinogen-III C-methyltransferase. An S-adenosyl-L-methionine-binding site is contributed by Pro-225. Asp-248 acts as the Proton acceptor in catalysis. Catalysis depends on Lys-270, which acts as the Proton donor. Residues 301–303 (GGD), Ile-306, 331–332 (TA), Met-382, and Gly-411 each bind S-adenosyl-L-methionine.

It in the N-terminal section; belongs to the precorrin-2 dehydrogenase / sirohydrochlorin ferrochelatase family. The protein in the C-terminal section; belongs to the precorrin methyltransferase family.

It catalyses the reaction uroporphyrinogen III + 2 S-adenosyl-L-methionine = precorrin-2 + 2 S-adenosyl-L-homocysteine + H(+). The enzyme catalyses precorrin-2 + NAD(+) = sirohydrochlorin + NADH + 2 H(+). The catalysed reaction is siroheme + 2 H(+) = sirohydrochlorin + Fe(2+). Its pathway is cofactor biosynthesis; adenosylcobalamin biosynthesis; precorrin-2 from uroporphyrinogen III: step 1/1. It participates in cofactor biosynthesis; adenosylcobalamin biosynthesis; sirohydrochlorin from precorrin-2: step 1/1. It functions in the pathway porphyrin-containing compound metabolism; siroheme biosynthesis; precorrin-2 from uroporphyrinogen III: step 1/1. The protein operates within porphyrin-containing compound metabolism; siroheme biosynthesis; siroheme from sirohydrochlorin: step 1/1. Its pathway is porphyrin-containing compound metabolism; siroheme biosynthesis; sirohydrochlorin from precorrin-2: step 1/1. Functionally, multifunctional enzyme that catalyzes the SAM-dependent methylations of uroporphyrinogen III at position C-2 and C-7 to form precorrin-2 via precorrin-1. Then it catalyzes the NAD-dependent ring dehydrogenation of precorrin-2 to yield sirohydrochlorin. Finally, it catalyzes the ferrochelation of sirohydrochlorin to yield siroheme. The chain is Siroheme synthase 2 from Klebsiella pneumoniae subsp. pneumoniae (strain ATCC 700721 / MGH 78578).